The chain runs to 430 residues: Microtubule-associated protein tau (430 aa).

Residues 1-16 show a composition bias toward basic and acidic residues; it reads MAEPRQEFDTAEDHAE. A disordered region spans residues 1 to 245; that stretch reads MAEPRQEFDT…PVPMPDLKNV (245 aa). At A2 the chain carries N-acetylalanine. At Y18 the chain carries Phosphotyrosine. A Glycyl lysine isopeptide (Lys-Gly) (interchain with G-Cter in ubiquitin) cross-link involves residue K31. Residues S33 and S48 each carry the phosphoserine modification. The segment covering 48-58 has biased composition (polar residues); it reads SETSDAKSTPT. 3 positions are modified to phosphothreonine: T56, T58, and T98. Basic and acidic residues predominate over residues 117 to 133; that stretch reads KGKEGTGSEDRKAKGAD. T142 is subject to Phosphothreonine. R144 is modified (omega-N-methylarginine). K152 is subject to N6,N6-dimethyllysine; alternate. K152 carries the N6-acetyllysine; alternate modification. Phosphothreonine occurs at positions 158, 164, 165, and 170. The segment covering 161–203 has biased composition (low complexity); the sequence is PAKTTPSPKTPPGTGEPAKSGDRSGYSSPGSPGTPGSRSRTPS. Residues S180 and S184 each carry the phosphoserine modification. Y186 carries the post-translational modification Phosphotyrosine. A phosphoserine mark is found at S187, S188, and S191. A phosphothreonine mark is found at T194 and T201. A Phosphoserine modification is found at S203. T206 carries the post-translational modification Phosphothreonine. The residue at position 214 (K214) is an N6-acetyllysine. Residue T220 is modified to Phosphothreonine. S224 and S226 each carry phosphoserine. Tau/MAP repeat units follow at residues 233–263, 264–294, 295–325, and 326–357; these read QTAP…GGGK, VQII…GGGS, VQIV…GGGQ, and VEVK…GGGN. Residue K243 forms a Glycyl lysine isopeptide (Lys-Gly) (interchain with G-Cter in ubiquitin) linkage. K248 carries the N6-acetyllysine; alternate modification. K248 is modified (N6-methyllysine; alternate). K248 is covalently cross-linked (Glycyl lysine isopeptide (Lys-Gly) (interchain with G-Cter in ubiquitin); alternate). S251 carries the post-translational modification Phosphoserine. K256 participates in a covalent cross-link: Glycyl lysine isopeptide (Lys-Gly) (interchain with G-Cter in ubiquitin). Residue K270 is modified to N6-acetyllysine; alternate. K270 participates in a covalent cross-link: Glycyl lysine isopeptide (Lys-Gly) (interchain with G-Cter in ubiquitin); alternate. Residues S274 and S278 each carry the phosphoserine modification. N6-acetyllysine is present on K279. A disulfide bridge connects residues C280 and C311. The residue at position 282 (S282) is a Phosphoserine. Position 287 is an N6-acetyllysine; alternate (K287). Residue K287 forms a Glycyl lysine isopeptide (Lys-Gly) (interchain with G-Cter in ubiquitin); alternate linkage. S294 is subject to Phosphoserine. N6,N6-dimethyllysine; alternate is present on K300. An N6-acetyllysine; alternate mark is found at K300, K306, and K310. Glycyl lysine isopeptide (Lys-Gly) (interchain with G-Cter in ubiquitin); alternate cross-links involve residues K300, K306, and K310. S313 carries the post-translational modification Phosphoserine. Residues K320, K332, and K336 each carry the N6-acetyllysine; alternate modification. Glycyl lysine isopeptide (Lys-Gly) (interchain with G-Cter in ubiquitin); alternate cross-links involve residues K320, K332, and K336. Omega-N-methylarginine is present on R338. Phosphoserine is present on S341. K342 is covalently cross-linked (Glycyl lysine isopeptide (Lys-Gly) (interchain with G-Cter in ubiquitin)). S345 is modified (phosphoserine). The residue at position 358 (K358) is an N6-acetyllysine; alternate. K358 participates in a covalent cross-link: Glycyl lysine isopeptide (Lys-Gly) (interchain with G-Cter in ubiquitin); alternate. K364 participates in a covalent cross-link: Glycyl lysine isopeptide (Lys-Gly) (interchain with G-Cter in ubiquitin). N6-acetyllysine; alternate is present on K374. K374 is covalently cross-linked (Glycyl lysine isopeptide (Lys-Gly) (interchain with G-Cter in ubiquitin); alternate). At Y383 the chain carries Phosphotyrosine. A phosphoserine mark is found at S385 and S389. The disordered stretch occupies residues 387–406; the sequence is VVSGDTSPRHLSNVSSTGSI. Over residues 390-406 the composition is skewed to polar residues; sequence GDTSPRHLSNVSSTGSI. Position 392 is a phosphothreonine (T392). Residues S393, S398, S405, and S411 each carry the phosphoserine modification. At T416 the chain carries Phosphothreonine.

As to quaternary structure, interacts with MARK1, MARK2, MARK3 and MARK4. Interacts with SQSTM1 when polyubiquitinated. Interacts with PSMC2 through SQSTM1. Interacts with FKBP4. Binds to CSNK1D. Interacts with SGK1. Interacts with PIN1. Interacts with LRRK2. Interacts with LRP1, leading to endocytosis; this interaction is reduced in the presence of LRPAP1/RAP. In terms of processing, polyubiquitinated. Requires functional TRAF6 and may provoke SQSTM1-dependent degradation by the proteasome. Post-translationally, phosphorylation at various serine and threonine residues in S-P or T-P motifs by proline-directed protein kinases (PDPK1, CDK1, CDK5, GSK3, MAPK) (a few sites per protein in interphase, more in mitosis), and at serine residues in K-X-G-S motifs by MAP/microtubule affinity-regulating kinase (MARK1, MARK2, MARK3 or MARK4), causing detachment from microtubules, and their disassembly. Phosphorylation at Ser-345 by BRSK1 and BRSK2 in neurons affects ability to bind microtubules and plays a role in neuron polarization. Phosphorylated by PHK. Dephosphorylation at several serine and threonine residues by the serine/threonine phosphatase PPP5C. Hyperphosphorylated (in particular at Thr-170, Ser-191, Thr-194, Ser-251, and Ser-345) during hibernation. Phosphorylation is fully reversible after arousal. Highly phosphorylated tau contains a number of paired helical filaments (PHFs)-like epitopes. PHF-like phosphorylation is not associated with fibril formation. Distribution of PHF-like tau is more intense in the entorhinal cortex, hippocampus and isocortical areas. PHF-like phosphorylation-dephosphorylation during hibernation cycle is synchronized with regression-re-establishment of afferentation. It may reflect a protective mechanism in an unfavorable environment.

Its subcellular location is the cytoplasm. The protein resides in the cytosol. It is found in the cell membrane. The protein localises to the cytoskeleton. It localises to the cell projection. Its subcellular location is the axon. The protein resides in the dendrite. Its function is as follows. Promotes microtubule assembly and stability, and might be involved in the establishment and maintenance of neuronal polarity. The C-terminus binds axonal microtubules while the N-terminus binds neural plasma membrane components, suggesting that tau functions as a linker protein between both. Axonal polarity is predetermined by tau localization (in the neuronal cell) in the domain of the cell body defined by the centrosome. The short isoforms allow plasticity of the cytoskeleton whereas the longer isoforms may preferentially play a role in its stabilization. This Spermophilus citellus (European ground squirrel) protein is Microtubule-associated protein tau (MAPT).